The sequence spans 714 residues: DNA ligase (714 aa).

NAD(+) is bound by residues 59–63 (DYEYD), 108–109 (SL), and glutamate 139. Residue lysine 141 is the N6-AMP-lysine intermediate of the active site. Residues arginine 162, glutamate 200, lysine 325, and lysine 349 each contribute to the NAD(+) site. Zn(2+)-binding residues include cysteine 443, cysteine 446, cysteine 461, and cysteine 466. Residues 624–713 (VVENIFEGKT…IPDDLKDKVH (90 aa)) form the BRCT domain.

It belongs to the NAD-dependent DNA ligase family. LigA subfamily. Requires Mg(2+) as cofactor. It depends on Mn(2+) as a cofactor.

It carries out the reaction NAD(+) + (deoxyribonucleotide)n-3'-hydroxyl + 5'-phospho-(deoxyribonucleotide)m = (deoxyribonucleotide)n+m + AMP + beta-nicotinamide D-nucleotide.. DNA ligase that catalyzes the formation of phosphodiester linkages between 5'-phosphoryl and 3'-hydroxyl groups in double-stranded DNA using NAD as a coenzyme and as the energy source for the reaction. It is essential for DNA replication and repair of damaged DNA. In Persephonella marina (strain DSM 14350 / EX-H1), this protein is DNA ligase.